We begin with the raw amino-acid sequence, 92 residues long: Actobindin-A (92 aa).

2 disordered regions span residues 1–33 (MSAPNPLLAEINKGADLKHTETQDKSAPKIGSD) and 54–92 (LKHAETDDKSAPKINENTTIKPNNHSALLGEIKAKAADS). WH2 domains are found at residues 3 to 20 (APNPLLAEINKGADLKHT) and 40 to 57 (DHASLLSEVEQGAKLKHA). Basic and acidic residues-rich tracts occupy residues 13 to 33 (KGADLKHTETQDKSAPKIGSD) and 54 to 64 (LKHAETDDKSA). The span at 68–79 (NENTTIKPNNHS) shows a compositional bias: polar residues.

Monomer.

Its function is as follows. Is able to bind two actin monomers at high concentrations of G-actin. Inhibits actin polymerization by sequestering G-actin and stabilizing actin dimers. The polypeptide is Actobindin-A (abnA) (Dictyostelium discoideum (Social amoeba)).